We begin with the raw amino-acid sequence, 218 residues long: Protein-L-isoaspartate O-methyltransferase (218 aa).

S60 is an active-site residue.

This sequence belongs to the methyltransferase superfamily. L-isoaspartyl/D-aspartyl protein methyltransferase family.

It is found in the cytoplasm. It catalyses the reaction [protein]-L-isoaspartate + S-adenosyl-L-methionine = [protein]-L-isoaspartate alpha-methyl ester + S-adenosyl-L-homocysteine. In terms of biological role, catalyzes the methyl esterification of L-isoaspartyl residues in peptides and proteins that result from spontaneous decomposition of normal L-aspartyl and L-asparaginyl residues. It plays a role in the repair and/or degradation of damaged proteins. The polypeptide is Protein-L-isoaspartate O-methyltransferase (Roseiflexus castenholzii (strain DSM 13941 / HLO8)).